Reading from the N-terminus, the 283-residue chain is Bifunctional protein FolD (283 aa).

NADP(+)-binding positions include Gly159 to Ser161, Ser184, and Ile225.

Belongs to the tetrahydrofolate dehydrogenase/cyclohydrolase family. Homodimer.

It catalyses the reaction (6R)-5,10-methylene-5,6,7,8-tetrahydrofolate + NADP(+) = (6R)-5,10-methenyltetrahydrofolate + NADPH. The catalysed reaction is (6R)-5,10-methenyltetrahydrofolate + H2O = (6R)-10-formyltetrahydrofolate + H(+). The protein operates within one-carbon metabolism; tetrahydrofolate interconversion. Catalyzes the oxidation of 5,10-methylenetetrahydrofolate to 5,10-methenyltetrahydrofolate and then the hydrolysis of 5,10-methenyltetrahydrofolate to 10-formyltetrahydrofolate. The protein is Bifunctional protein FolD of Methanoculleus marisnigri (strain ATCC 35101 / DSM 1498 / JR1).